The following is a 334-amino-acid chain: MTPFDAKRPLQLNDQGQLRHFLSLDGLPRELLTEILDTADSFLEVGARAVKKVPLLRGKTVCNVFFENSTRTRTTFELAAQRLSADVISLNVSTSSTSKGETLFDTLRNLEAMAADMFVVRHSDSGAAHFIAEHVCPDVAVINGGDGRHAHPTQGMLDMLTIRRHKGSFENLSVAIVGDILHSRVARSDMLALKALGCPDIRVIGPKTLIPIGIEQYGVKVYTDLAEGLKDVDVVIMLRLQRERMAGGLLPSEGEFYRLFGLTTARLAGAKPDAIVMHPGPINRGVEIESAVADGKHSVILNQVTYGIAVRMAVLSMAMSGQNAQRQFDQENAQ.

Arg71 and Thr72 together coordinate carbamoyl phosphate. Lys99 contributes to the L-aspartate binding site. Carbamoyl phosphate contacts are provided by Arg121, His151, and Gln154. L-aspartate contacts are provided by Arg184 and Arg239. Positions 280 and 281 each coordinate carbamoyl phosphate.

Belongs to the aspartate/ornithine carbamoyltransferase superfamily. ATCase family. Heterododecamer (2C3:3R2) of six catalytic PyrB chains organized as two trimers (C3), and six regulatory PyrI chains organized as three dimers (R2).

It catalyses the reaction carbamoyl phosphate + L-aspartate = N-carbamoyl-L-aspartate + phosphate + H(+). It participates in pyrimidine metabolism; UMP biosynthesis via de novo pathway; (S)-dihydroorotate from bicarbonate: step 2/3. Catalyzes the condensation of carbamoyl phosphate and aspartate to form carbamoyl aspartate and inorganic phosphate, the committed step in the de novo pyrimidine nucleotide biosynthesis pathway. In Pseudomonas entomophila (strain L48), this protein is Aspartate carbamoyltransferase catalytic subunit.